A 396-amino-acid chain; its full sequence is Deoxyguanosinetriphosphate triphosphohydrolase-like protein (396 aa).

Residues 69 to 211 form the HD domain; the sequence is RLSHSLEVSQ…AALADDIAYN (143 aa).

It belongs to the dGTPase family. Type 2 subfamily.

The chain is Deoxyguanosinetriphosphate triphosphohydrolase-like protein from Parvibaculum lavamentivorans (strain DS-1 / DSM 13023 / NCIMB 13966).